We begin with the raw amino-acid sequence, 259 residues long: Type III pantothenate kinase (259 aa).

Position 6 to 13 (6 to 13 (DTGNTNTV)) interacts with ATP. 107–110 (GPDR) contacts substrate. The active-site Proton acceptor is Asp109. Asp129 serves as a coordination point for K(+). Thr132 contacts ATP. Substrate is bound at residue Thr184.

It belongs to the type III pantothenate kinase family. In terms of assembly, homodimer. It depends on NH4(+) as a cofactor. The cofactor is K(+).

The protein localises to the cytoplasm. The catalysed reaction is (R)-pantothenate + ATP = (R)-4'-phosphopantothenate + ADP + H(+). It participates in cofactor biosynthesis; coenzyme A biosynthesis; CoA from (R)-pantothenate: step 1/5. Its function is as follows. Catalyzes the phosphorylation of pantothenate (Pan), the first step in CoA biosynthesis. In Paracoccus denitrificans (strain Pd 1222), this protein is Type III pantothenate kinase.